A 180-amino-acid polypeptide reads, in one-letter code: Negative modulator of initiation of replication (180 aa).

3 interaction with DNA regions span residues Ala86–Val87, Arg115–Tyr119, and Asn149–Lys155.

Belongs to the SeqA family. As to quaternary structure, homodimer. Polymerizes to form helical filaments.

It localises to the cytoplasm. Its function is as follows. Negative regulator of replication initiation, which contributes to regulation of DNA replication and ensures that replication initiation occurs exactly once per chromosome per cell cycle. Binds to pairs of hemimethylated GATC sequences in the oriC region, thus preventing assembly of replication proteins and re-initiation at newly replicated origins. Repression is relieved when the region becomes fully methylated. This Enterobacter sp. (strain 638) protein is Negative modulator of initiation of replication.